The chain runs to 147 residues: MASILVLHGPNLNLLGTREPEIYGAETLDDINFRLTETARQAGHHLLTLQSNAEYELIDRIHEAKKEGVDFIIINPAAFTHTSVALRDALLGVGIPFIETHLSNVHAREAFRHHSYFSDVAVGVICGFGSQSYELALQAAFSKITGK.

The active-site Proton acceptor is Tyr-23. Substrate-binding residues include Asn-75, His-81, and Asp-88. The active-site Proton donor is the His-101. Substrate-binding positions include 102–103 (LS) and Arg-112.

This sequence belongs to the type-II 3-dehydroquinase family. As to quaternary structure, homododecamer.

It carries out the reaction 3-dehydroquinate = 3-dehydroshikimate + H2O. It participates in metabolic intermediate biosynthesis; chorismate biosynthesis; chorismate from D-erythrose 4-phosphate and phosphoenolpyruvate: step 3/7. In terms of biological role, catalyzes a trans-dehydration via an enolate intermediate. This is 3-dehydroquinate dehydratase from Hahella chejuensis (strain KCTC 2396).